A 93-amino-acid chain; its full sequence is Alpha-defensin 22 (93 aa).

The signal sequence occupies residues 1-19; sequence MKKLVLLSALVLLAYQVQT. Residues 20 to 58 constitute a propeptide that is removed on maturation; that stretch reads DPIQNTDEETNTEEQPGEEDQAVSVSFGGQEGSALHEKL. Residues 22–41 form a disordered region; that stretch reads IQNTDEETNTEEQPGEEDQA. The span at 25–40 shows a compositional bias: acidic residues; sequence TDEETNTEEQPGEEDQ. Cystine bridges form between cysteine 64–cysteine 89, cysteine 66–cysteine 81, and cysteine 71–cysteine 88.

Belongs to the alpha-defensin family.

Its subcellular location is the secreted. In terms of biological role, may have microbicidal activities. This chain is Alpha-defensin 22 (Defa22), found in Mus musculus (Mouse).